Here is a 235-residue protein sequence, read N- to C-terminus: Ion-translocating oxidoreductase complex subunit E (235 aa).

The next 5 membrane-spanning stretches (helical) occupy residues 63–83 (LGLG…ISLF), 93–113 (IPIY…LMNA), 117–137 (TLYQ…IIIG), 152–172 (IWDG…LGAL), and 206–226 (SFLL…LLAI).

Belongs to the NqrDE/RnfAE family. The complex is composed of six subunits: RnfA, RnfB, RnfC, RnfD, RnfE and RnfG.

Its subcellular location is the cell inner membrane. Functionally, part of a membrane-bound complex that couples electron transfer with translocation of ions across the membrane. This is Ion-translocating oxidoreductase complex subunit E from Haemophilus influenzae (strain ATCC 51907 / DSM 11121 / KW20 / Rd).